The sequence spans 107 residues: UPF0145 protein PC1_1703 (107 aa).

This sequence belongs to the UPF0145 family.

The sequence is that of UPF0145 protein PC1_1703 from Pectobacterium carotovorum subsp. carotovorum (strain PC1).